Reading from the N-terminus, the 170-residue chain is Cysteine-rich venom protein VAR4 (170 aa).

Residues 1–22 (MILLKLYLTLAAILCQSRGTTS) form the signal peptide. The region spanning 41-169 (NKHNDLRRTV…PLKYFLVCQY (129 aa)) is the SCP domain. 3 cysteine pairs are disulfide-bonded: Cys77-Cys156, Cys95-Cys170, and Cys151-Cys167.

The protein belongs to the CRISP family. Contains 8 disulfide bonds. In terms of tissue distribution, expressed by the venom gland.

It localises to the secreted. Functionally, blocks ryanodine receptors, and potassium channels. The sequence is that of Cysteine-rich venom protein VAR4 from Varanus acanthurus (Ridge-tailed monitor).